The sequence spans 154 residues: Myoglobin (154 aa).

The 147-residue stretch at 2–148 (GLSDGEWQLV…FRNDIAAKYK (147 aa)) folds into the Globin domain. Position 4 is a phosphoserine (serine 4). A nitrite-binding site is contributed by histidine 65. Histidine 65 is a binding site for O2. Threonine 68 carries the phosphothreonine modification. Residue histidine 94 participates in heme b binding.

It belongs to the globin family. Monomeric.

It is found in the cytoplasm. It localises to the sarcoplasm. It catalyses the reaction Fe(III)-heme b-[protein] + nitric oxide + H2O = Fe(II)-heme b-[protein] + nitrite + 2 H(+). The catalysed reaction is H2O2 + AH2 = A + 2 H2O. Monomeric heme protein which primary function is to store oxygen and facilitate its diffusion within muscle tissues. Reversibly binds oxygen through a pentacoordinated heme iron and enables its timely and efficient release as needed during periods of heightened demand. Depending on the oxidative conditions of tissues and cells, and in addition to its ability to bind oxygen, it also has a nitrite reductase activity whereby it regulates the production of bioactive nitric oxide. Under stress conditions, like hypoxia and anoxia, it also protects cells against reactive oxygen species thanks to its pseudoperoxidase activity. The protein is Myoglobin (MB) of Sciurus vulgaris (Eurasian red squirrel).